The chain runs to 156 residues: UPF0266 membrane protein YobD (156 aa).

Over 1–5 (MTITD) the chain is Periplasmic. The chain crosses the membrane as a helical span at residues 6–26 (LVLILFIAALLAYALYDQFIM). The Cytoplasmic segment spans residues 27 to 44 (PRRNGPTLLSIALLRRGR). The helical transmembrane segment at 45-65 (VDSVIFVGLVAILIYNNVTSH) threads the bilayer. G66 is a topological domain (periplasmic). The chain crosses the membrane as a helical span at residues 67-87 (AQMTTWLLSALALMGFYIFWI). The Cytoplasmic portion of the chain corresponds to 88-156 (RTPRIIFKQR…LLIENQYLKI (69 aa)).

It belongs to the UPF0266 family.

It is found in the cell inner membrane. The protein is UPF0266 membrane protein YobD (yobD) of Salmonella typhimurium (strain LT2 / SGSC1412 / ATCC 700720).